A 363-amino-acid chain; its full sequence is MAP kinase kinase mkk-4 (363 aa).

The interval 1 to 38 is disordered; sequence MVQEDDENLRNSMSLRPTSLSTRPTSLSVNGNEKTLPE. Residues 14 to 28 show a composition bias toward low complexity; that stretch reads SLRPTSLSTRPTSLS. Residues 66-330 form the Protein kinase domain; it reads LQDLGAIGNG…YDTLKSFDFY (265 aa). Residues 72-80 and Lys-95 contribute to the ATP site; that span reads IGNGNFGTV. The active-site Proton acceptor is Asp-194.

It belongs to the protein kinase superfamily. STE Ser/Thr protein kinase family. MAP kinase kinase subfamily. Expressed in the pharynx, including the corpus, isthmus and terminal bulb.

It localises to the cytoplasm. The enzyme catalyses L-seryl-[protein] + ATP = O-phospho-L-seryl-[protein] + ADP + H(+). It carries out the reaction L-threonyl-[protein] + ATP = O-phospho-L-threonyl-[protein] + ADP + H(+). It catalyses the reaction L-tyrosyl-[protein] + ATP = O-phospho-L-tyrosyl-[protein] + ADP + H(+). In terms of biological role, activity is required in presynaptic neurons, in a dose-dependent manner, for normal presynaptic development and morphology. Plays a role in the formation of muscle connections, also called muscle arm extensions, between the body wall and the motor axons in the dorsal and ventral cord. The protein is MAP kinase kinase mkk-4 (mkk-4) of Caenorhabditis elegans.